Here is a 274-residue protein sequence, read N- to C-terminus: Cytochrome b-c1 complex subunit Rieske, mitochondrial (274 aa).

The Mitochondrial matrix portion of the chain corresponds to 79 to 103 (SHTDVKVPDFYDYRRLEVLDSTKSS). A helical transmembrane segment spans residues 104 to 140 (RESSEARKGFSYLVTAVTTVGVAYAAKNVVTQFISSM). The Mitochondrial intermembrane segment spans residues 141-274 (SASADVLAMA…FTGDDVVVVG (134 aa)). In terms of domain architecture, Rieske spans 187-272 (EAAVELSQLR…YEFTGDDVVV (86 aa)). Positions 217, 219, 236, 239, and 241 each coordinate [2Fe-2S] cluster. The cysteines at positions 222 and 238 are disulfide-linked.

This sequence belongs to the Rieske iron-sulfur protein family. As to quaternary structure, component of the ubiquinol-cytochrome c oxidoreductase (cytochrome b-c1 complex, complex III, CIII), a multisubunit enzyme composed of 11 subunits. The complex is composed of 3 respiratory subunits cytochrome b, cytochrome c1 and Rieske protein UQCRFS1, 2 core protein subunits UQCRC1/QCR1 and UQCRC2/QCR2, and 6 low-molecular weight protein subunits UQCRH/QCR6, UQCRB/QCR7, UQCRQ/QCR8, UQCR10/QCR9, UQCR11/QCR10 and subunit 9, the cleavage product of Rieske protein UQCRFS1. The complex exists as an obligatory dimer and forms supercomplexes (SCs) in the inner mitochondrial membrane with NADH-ubiquinone oxidoreductase (complex I, CI) and cytochrome c oxidase (complex IV, CIV), resulting in different assemblies (supercomplex SCI(1)III(2)IV(1) and megacomplex MCI(2)III(2)IV(2)). Incorporation of the Rieske protein UQCRFS1 is the penultimate step in complex III assembly. Interacts with TTC19, which is involved in the clearance of UQCRFS1 fragments. In terms of assembly, component of the ubiquinol-cytochrome c oxidoreductase (cytochrome b-c1 complex, complex III, CIII). Subunit 9 corresponds to the mitochondrial targeting sequence (MTS) of Rieske protein UQCRFS1. It is retained after processing and incorporated inside complex III, where it remains bound to the complex and localizes between the 2 core subunits UQCRC1/QCR1 and UQCRC2/QCR2. Requires [2Fe-2S] cluster as cofactor. Proteolytic processing is necessary for the correct insertion of UQCRFS1 in the complex III dimer. Several fragments are generated during UQCRFS1 insertion, most probably due to the endogenous matrix-processing peptidase (MPP) activity of the 2 core protein subunits UQCRC1/QCR1 and UQCRC2/QCR2, which are homologous to the 2 mitochondrial-processing peptidase (MPP) subunits beta-MPP and alpha-MPP respectively. The action of the protease is also necessary for the clearance of the UQCRFS1 fragments.

It is found in the mitochondrion inner membrane. The enzyme catalyses a quinol + 2 Fe(III)-[cytochrome c](out) = a quinone + 2 Fe(II)-[cytochrome c](out) + 2 H(+)(out). Component of the ubiquinol-cytochrome c oxidoreductase, a multisubunit transmembrane complex that is part of the mitochondrial electron transport chain which drives oxidative phosphorylation. The respiratory chain contains 3 multisubunit complexes succinate dehydrogenase (complex II, CII), ubiquinol-cytochrome c oxidoreductase (cytochrome b-c1 complex, complex III, CIII) and cytochrome c oxidase (complex IV, CIV), that cooperate to transfer electrons derived from NADH and succinate to molecular oxygen, creating an electrochemical gradient over the inner membrane that drives transmembrane transport and the ATP synthase. The cytochrome b-c1 complex catalyzes electron transfer from ubiquinol to cytochrome c, linking this redox reaction to translocation of protons across the mitochondrial inner membrane, with protons being carried across the membrane as hydrogens on the quinol. In the process called Q cycle, 2 protons are consumed from the matrix, 4 protons are released into the intermembrane space and 2 electrons are passed to cytochrome c. The Rieske protein is a catalytic core subunit containing a [2Fe-2S] iron-sulfur cluster. It cycles between 2 conformational states during catalysis to transfer electrons from the quinol bound in the Q(0) site in cytochrome b to cytochrome c1. Incorporation of UQCRFS1 is the penultimate step in complex III assembly. In terms of biological role, component of the ubiquinol-cytochrome c oxidoreductase (cytochrome b-c1 complex, complex III, CIII). UQCRFS1 undergoes proteolytic processing once it is incorporated in the complex III dimer. One of the fragments, called subunit 9, corresponds to its mitochondrial targeting sequence (MTS). The proteolytic processing is necessary for the correct insertion of UQCRFS1 in the complex III dimer, but the persistence of UQCRFS1-derived fragments may prevent newly imported UQCRFS1 to be processed and assembled into complex III and is detrimental for the complex III structure and function. This Chlorocebus aethiops (Green monkey) protein is Cytochrome b-c1 complex subunit Rieske, mitochondrial (UQCRFS1).